Consider the following 372-residue polypeptide: L-selectin (372 aa).

The first 28 residues, 1 to 28 (MIFPWKCQSTQRDLWNIFKLWGWTMLCC), serve as a signal peptide directing secretion. Residues 29–38 (DFLAHHGTDC) constitute a propeptide that is removed on maturation. The Extracellular portion of the chain corresponds to 39–332 (WTYHYSEKPM…FSMIKEGDYN (294 aa)). Residues 55–155 (RFCRDNYTDL…ACHKLKAALC (101 aa)) form the C-type lectin domain. Intrachain disulfides connect cysteine 57–cysteine 155, cysteine 128–cysteine 147, cysteine 128–cysteine 160, cysteine 160–cysteine 171, cysteine 165–cysteine 180, cysteine 182–cysteine 191, cysteine 197–cysteine 241, cysteine 227–cysteine 254, cysteine 259–cysteine 303, and cysteine 289–cysteine 316. N-linked (GlcNAc...) asparagine glycosylation is found at asparagine 60 and asparagine 104. Ca(2+)-binding residues include glutamate 118, asparagine 120, glutamate 126, asparagine 143, and aspartate 144. The EGF-like domain maps to 156–192 (YTASCQPWSCSGHGECVEIINNYTCNCDVGYYGPQCQ). A glycan (N-linked (GlcNAc...) asparagine) is linked at asparagine 177. Sushi domains are found at residues 195 to 256 (IQCE…TCQV) and 257 to 318 (IQCE…ICQK). Asparagine 216, asparagine 232, asparagine 246, and asparagine 271 each carry an N-linked (GlcNAc...) asparagine glycan. Residues 333–355 (PLFIPVAVMVTAFSGLAFIIWLA) traverse the membrane as a helical segment. Residues 356–372 (RRLKKGKKSKRSMDDPY) are Cytoplasmic-facing.

This sequence belongs to the selectin/LECAM family. In terms of assembly, interaction with SELPLG/PSGL1 and PODXL2 is required for promoting recruitment and rolling of leukocytes. This interaction is dependent on the sialyl Lewis X glycan modification of SELPLG and PODXL2, and tyrosine sulfation modifications of SELPLG. Sulfation on 'Tyr-51' of SELPLG is important for L-selectin binding. Post-translationally, N-glycosylated.

It is found in the cell membrane. In terms of biological role, calcium-dependent lectin that mediates cell adhesion by binding to glycoproteins on neighboring cells. Mediates the adherence of lymphocytes to endothelial cells of high endothelial venules in peripheral lymph nodes. Promotes initial tethering and rolling of leukocytes in endothelia. The sequence is that of L-selectin (SELL) from Pan troglodytes (Chimpanzee).